The primary structure comprises 507 residues: Glycine, alanine and asparagine-rich protein (507 aa).

A signal peptide spans methionine 1–alanine 17. Positions serine 158 to alanine 185 form a coiled coil. Residues glycine 462–tyrosine 498 show a composition bias toward gly residues. Residues glycine 462–tyrosine 507 form a disordered region.

Component of the acid-soluble and acid-insoluble organic matrix of calcified shell layers (at protein level).

It is found in the secreted. This chain is Glycine, alanine and asparagine-rich protein, found in Haliotis asinina (Donkey's ear abalone).